Here is a 230-residue protein sequence, read N- to C-terminus: Demethylmenaquinone methyltransferase (230 aa).

S-adenosyl-L-methionine contacts are provided by residues T62, D80, 100 to 101 (DG), and S117.

This sequence belongs to the class I-like SAM-binding methyltransferase superfamily. MenG/UbiE family.

It catalyses the reaction a 2-demethylmenaquinol + S-adenosyl-L-methionine = a menaquinol + S-adenosyl-L-homocysteine + H(+). The protein operates within quinol/quinone metabolism; menaquinone biosynthesis; menaquinol from 1,4-dihydroxy-2-naphthoate: step 2/2. Functionally, methyltransferase required for the conversion of demethylmenaquinol (DMKH2) to menaquinol (MKH2). In Corynebacterium efficiens (strain DSM 44549 / YS-314 / AJ 12310 / JCM 11189 / NBRC 100395), this protein is Demethylmenaquinone methyltransferase.